The following is a 430-amino-acid chain: Adenylosuccinate synthetase (430 aa).

GTP contacts are provided by residues 12–18 (GDEGKGK) and 40–42 (GHT). Aspartate 13 (proton acceptor) is an active-site residue. Residues aspartate 13 and glycine 40 each contribute to the Mg(2+) site. IMP-binding positions include 13 to 16 (DEGK), 38 to 41 (NAGH), threonine 130, arginine 144, glutamine 224, threonine 239, and arginine 303. Histidine 41 functions as the Proton donor in the catalytic mechanism. 299–305 (VNTGRKR) is a substrate binding site. GTP contacts are provided by residues arginine 305, 331-333 (KLD), and 413-415 (STS).

This sequence belongs to the adenylosuccinate synthetase family. As to quaternary structure, homodimer. Requires Mg(2+) as cofactor.

It localises to the cytoplasm. The catalysed reaction is IMP + L-aspartate + GTP = N(6)-(1,2-dicarboxyethyl)-AMP + GDP + phosphate + 2 H(+). It participates in purine metabolism; AMP biosynthesis via de novo pathway; AMP from IMP: step 1/2. Its function is as follows. Plays an important role in the de novo pathway of purine nucleotide biosynthesis. Catalyzes the first committed step in the biosynthesis of AMP from IMP. The polypeptide is Adenylosuccinate synthetase (Rhodopseudomonas palustris (strain BisB18)).